The following is a 750-amino-acid chain: Photosystem I P700 chlorophyll a apoprotein A1 (750 aa).

Transmembrane regions (helical) follow at residues 72 to 95 (VFSA…FHGA), 158 to 181 (LYST…FHYH), 197 to 221 (LNHH…HVSL), 293 to 311 (TAHH…GHMY), 348 to 371 (WHAQ…HHMY), 387 to 413 (LSIF…IFMV), 435 to 457 (AIIS…LYIH), and 532 to 550 (FLVH…LILL). Residues Cys574 and Cys583 each contribute to the [4Fe-4S] cluster site. 2 consecutive transmembrane segments (helical) span residues 590–611 (HVFL…HFSW) and 664–686 (LSAY…MFLF). His675 serves as a coordination point for chlorophyll a'. Residues Met683 and Tyr691 each coordinate chlorophyll a. Trp692 lines the phylloquinone pocket. A helical membrane pass occupies residues 724-744 (AVGVAHYLLGGIATTWAFFLA).

This sequence belongs to the PsaA/PsaB family. As to quaternary structure, the PsaA/B heterodimer binds the P700 chlorophyll special pair and subsequent electron acceptors. PSI consists of a core antenna complex that captures photons, and an electron transfer chain that converts photonic excitation into a charge separation. The eukaryotic PSI reaction center is composed of at least 11 subunits. P700 is a chlorophyll a/chlorophyll a' dimer, A0 is one or more chlorophyll a, A1 is one or both phylloquinones and FX is a shared 4Fe-4S iron-sulfur center. serves as cofactor.

The protein localises to the plastid. The protein resides in the chloroplast thylakoid membrane. The enzyme catalyses reduced [plastocyanin] + hnu + oxidized [2Fe-2S]-[ferredoxin] = oxidized [plastocyanin] + reduced [2Fe-2S]-[ferredoxin]. Functionally, psaA and PsaB bind P700, the primary electron donor of photosystem I (PSI), as well as the electron acceptors A0, A1 and FX. PSI is a plastocyanin-ferredoxin oxidoreductase, converting photonic excitation into a charge separation, which transfers an electron from the donor P700 chlorophyll pair to the spectroscopically characterized acceptors A0, A1, FX, FA and FB in turn. Oxidized P700 is reduced on the lumenal side of the thylakoid membrane by plastocyanin. In Chlorokybus atmophyticus (Soil alga), this protein is Photosystem I P700 chlorophyll a apoprotein A1.